A 264-amino-acid polypeptide reads, in one-letter code: MKIEAVIFDWAGTTVDYGCFAPLEVFMEIFHKRGVGITAEEARKPMGLLKIDHVRALTEMPRIANEWNRIFGKLPTETDIQEMYEEFEEILFAILPRYASPIHGVKEVIASLRERGIKIGSTTGYTREMMDIVAKEAALQGYKPDFLVTPDDVPAGRPYPWMCYKNAMELGVYPMNHMIKIGDTVSDMKEGRNAGMWTVGVILGSSELGLSEEEVENMDPAELREKIEVVRNRFVENGAHFTIETMQELESVMERIEKQELIIS.

D9 functions as the Nucleophile in the catalytic mechanism. Positions 9 and 11 each coordinate Mg(2+). K50 serves as the catalytic Schiff-base intermediate with substrate. A Mg(2+)-binding site is contributed by D183.

Belongs to the HAD-like hydrolase superfamily. PhnX family. As to quaternary structure, homodimer. It depends on Mg(2+) as a cofactor.

It carries out the reaction phosphonoacetaldehyde + H2O = acetaldehyde + phosphate + H(+). Its function is as follows. Involved in phosphonate degradation. The polypeptide is Phosphonoacetaldehyde hydrolase (Bacillus cereus (strain ZK / E33L)).